A 269-amino-acid polypeptide reads, in one-letter code: 2-dehydro-3-deoxyphosphooctonate aldolase (269 aa).

The protein belongs to the KdsA family.

The protein localises to the cytoplasm. The catalysed reaction is D-arabinose 5-phosphate + phosphoenolpyruvate + H2O = 3-deoxy-alpha-D-manno-2-octulosonate-8-phosphate + phosphate. Its pathway is carbohydrate biosynthesis; 3-deoxy-D-manno-octulosonate biosynthesis; 3-deoxy-D-manno-octulosonate from D-ribulose 5-phosphate: step 2/3. The protein operates within bacterial outer membrane biogenesis; lipopolysaccharide biosynthesis. This chain is 2-dehydro-3-deoxyphosphooctonate aldolase, found in Chlamydia trachomatis serovar A (strain ATCC VR-571B / DSM 19440 / HAR-13).